The chain runs to 53 residues: Beta-defensin C7 (53 aa).

3 disulfide bridges follow: cysteine 20/cysteine 49, cysteine 27/cysteine 42, and cysteine 32/cysteine 50.

Belongs to the beta-defensin family.

Its subcellular location is the secreted. Its function is as follows. Has bactericidal activity. This Bos taurus (Bovine) protein is Beta-defensin C7.